Reading from the N-terminus, the 568-residue chain is MFS-type efflux transporter phmH (568 aa).

Over residues 1–11 (MVSGTDTTEVG) the composition is skewed to polar residues. Positions 1-39 (MVSGTDTTEVGATTKAPPSEGTEGILDDHSSNSQPQAEK) are disordered. Transmembrane regions (helical) follow at residues 45 to 65 (YPLS…VSAL), 101 to 121 (YVMI…GGSS), 134 to 154 (GIGA…LVPM), 161 to 181 (IGLL…VGGI), 199 to 219 (IFYI…LFLH), 237 to 257 (VIGN…LTYG), and 268 to 288 (IAAP…WEMS). N-linked (GlcNAc...) asparagine glycosylation is present at asparagine 303. A run of 6 helical transmembrane segments spans residues 307–327 (AAAF…NFFY), 344–364 (VYTL…GAIV), 372–392 (TVHL…SILD), 399–419 (EWVI…STTL), 437–457 (TWSF…AAIF), and 515–535 (IGIV…EIHL). A glycan (N-linked (GlcNAc...) asparagine) is linked at asparagine 563.

It belongs to the major facilitator superfamily.

It localises to the cell membrane. Its function is as follows. MFS-type efflux transporter; part of the gene cluster that mediates the biosynthesis of thethe mycotoxins phomacins, leucine-derived cytochalasans with potent actin polymerization-inhibitory activities and monocot-specific antigerminative activities. PhmH might be involved in the excretion of phomacins. The sequence is that of MFS-type efflux transporter phmH from Phaeosphaeria nodorum (strain SN15 / ATCC MYA-4574 / FGSC 10173) (Glume blotch fungus).